The sequence spans 356 residues: DNA polymerase IV (356 aa).

Positions 1–188 (MDTSRKIIHI…IPVTKFYGVG (188 aa)) constitute a UmuC domain. Asp-11 and Asp-106 together coordinate Mg(2+). Residue Glu-107 is part of the active site.

This sequence belongs to the DNA polymerase type-Y family. In terms of assembly, monomer. Mg(2+) serves as cofactor.

The protein resides in the cytoplasm. The catalysed reaction is DNA(n) + a 2'-deoxyribonucleoside 5'-triphosphate = DNA(n+1) + diphosphate. In terms of biological role, poorly processive, error-prone DNA polymerase involved in untargeted mutagenesis. Copies undamaged DNA at stalled replication forks, which arise in vivo from mismatched or misaligned primer ends. These misaligned primers can be extended by PolIV. Exhibits no 3'-5' exonuclease (proofreading) activity. May be involved in translesional synthesis, in conjunction with the beta clamp from PolIII. This chain is DNA polymerase IV, found in Listeria innocua serovar 6a (strain ATCC BAA-680 / CLIP 11262).